Consider the following 221-residue polypeptide: Large ribosomal subunit protein bL25 (221 aa).

The disordered stretch occupies residues 174 to 221; it reads SVVTVVPPTDEPTEEEVEAMEGEAATEEPEVVGEEKEEDSEEENKDEE. The segment covering 184–221 has biased composition (acidic residues); the sequence is EPTEEEVEAMEGEAATEEPEVVGEEKEEDSEEENKDEE.

This sequence belongs to the bacterial ribosomal protein bL25 family. CTC subfamily. In terms of assembly, part of the 50S ribosomal subunit; part of the 5S rRNA/L5/L18/L25 subcomplex. Contacts the 5S rRNA. Binds to the 5S rRNA independently of L5 and L18.

This is one of the proteins that binds to the 5S RNA in the ribosome where it forms part of the central protuberance. The chain is Large ribosomal subunit protein bL25 from Staphylococcus haemolyticus (strain JCSC1435).